We begin with the raw amino-acid sequence, 432 residues long: Glutamyl-tRNA reductase (432 aa).

Residues 55–58 (TCNR), Ser114, 119–121 (ETQ), and Gln125 contribute to the substrate site. The active-site Nucleophile is the Cys56. 194-199 (GAGEMI) provides a ligand contact to NADP(+).

Belongs to the glutamyl-tRNA reductase family. Homodimer.

It catalyses the reaction (S)-4-amino-5-oxopentanoate + tRNA(Glu) + NADP(+) = L-glutamyl-tRNA(Glu) + NADPH + H(+). It functions in the pathway porphyrin-containing compound metabolism; protoporphyrin-IX biosynthesis; 5-aminolevulinate from L-glutamyl-tRNA(Glu): step 1/2. In terms of biological role, catalyzes the NADPH-dependent reduction of glutamyl-tRNA(Glu) to glutamate 1-semialdehyde (GSA). The sequence is that of Glutamyl-tRNA reductase from Burkholderia lata (strain ATCC 17760 / DSM 23089 / LMG 22485 / NCIMB 9086 / R18194 / 383).